An 88-amino-acid polypeptide reads, in one-letter code: MASSDVKPKSVSHAKKWSEEIENLYRFQQAGYRDETEYRQVKQVSMVDRWPETGYVKKLQRRDNTFYYYNKQRECDDKEVHKVKIYAY.

It belongs to the MEIG1 family. As to quaternary structure, interacts with PACRG. Interacts with MORN3.

Functionally, essential for spermiogenesis. This is Meiosis expressed gene 1 protein homolog from Homo sapiens (Human).